A 316-amino-acid polypeptide reads, in one-letter code: ATP synthase gamma chain (316 aa).

The protein belongs to the ATPase gamma chain family. F-type ATPases have 2 components, CF(1) - the catalytic core - and CF(0) - the membrane proton channel. CF(1) has five subunits: alpha(3), beta(3), gamma(1), delta(1), epsilon(1). CF(0) has three main subunits: a, b and c.

Its subcellular location is the cellular thylakoid membrane. Produces ATP from ADP in the presence of a proton gradient across the membrane. The gamma chain is believed to be important in regulating ATPase activity and the flow of protons through the CF(0) complex. The polypeptide is ATP synthase gamma chain (Prochlorococcus marinus (strain MIT 9515)).